The primary structure comprises 352 residues: Chorismate synthase (352 aa).

NADP(+)-binding residues include Arg48 and Arg54. FMN-binding positions include 125 to 127, 238 to 239, Ala278, 293 to 297, and Arg319; these read RAS, NA, and KPASS.

Belongs to the chorismate synthase family. As to quaternary structure, homotetramer. FMNH2 serves as cofactor.

It carries out the reaction 5-O-(1-carboxyvinyl)-3-phosphoshikimate = chorismate + phosphate. It participates in metabolic intermediate biosynthesis; chorismate biosynthesis; chorismate from D-erythrose 4-phosphate and phosphoenolpyruvate: step 7/7. Functionally, catalyzes the anti-1,4-elimination of the C-3 phosphate and the C-6 proR hydrogen from 5-enolpyruvylshikimate-3-phosphate (EPSP) to yield chorismate, which is the branch point compound that serves as the starting substrate for the three terminal pathways of aromatic amino acid biosynthesis. This reaction introduces a second double bond into the aromatic ring system. The sequence is that of Chorismate synthase from Coxiella burnetii (strain RSA 493 / Nine Mile phase I).